Consider the following 156-residue polypeptide: MKCPKCNSTHSRVVDSRHADEVNAIRRRRECEECETRFTTFEHIEKRPLIVVKKDGTREQFLREKILNGLVRSCEKRPVRYEQLEDITNNVEWKLRDEGRAEISSREIGEHVMNLLMHVDQVSYVRFASVYKEFKDVDQLLQSMQGILAENKRSDS.

Residues 3–34 (CPKCNSTHSRVVDSRHADEVNAIRRRRECEEC) fold into a zinc finger. One can recognise an ATP-cone domain in the interval 49-139 (LIVVKKDGTR…VYKEFKDVDQ (91 aa)).

Belongs to the NrdR family. Zn(2+) is required as a cofactor.

In terms of biological role, negatively regulates transcription of bacterial ribonucleotide reductase nrd genes and operons by binding to NrdR-boxes. This Staphylococcus saprophyticus subsp. saprophyticus (strain ATCC 15305 / DSM 20229 / NCIMB 8711 / NCTC 7292 / S-41) protein is Transcriptional repressor NrdR.